The sequence spans 261 residues: Hemin import ATP-binding protein HmuV (261 aa).

The ABC transporter domain occupies 8–243 (IRVTDLSYSV…ESIRTAYGHE (236 aa)). 40-47 (GRNGAGKS) is an ATP binding site.

Belongs to the ABC transporter superfamily. Heme (hemin) importer (TC 3.A.1.14.5) family. As to quaternary structure, the complex is composed of two ATP-binding proteins (HmuV), two transmembrane proteins (HmuU) and a solute-binding protein (HmuT).

Its subcellular location is the cell membrane. Functionally, part of the ABC transporter complex HmuTUV involved in hemin import. Responsible for energy coupling to the transport system. This is Hemin import ATP-binding protein HmuV from Deinococcus radiodurans (strain ATCC 13939 / DSM 20539 / JCM 16871 / CCUG 27074 / LMG 4051 / NBRC 15346 / NCIMB 9279 / VKM B-1422 / R1).